A 260-amino-acid chain; its full sequence is RxLR effector protein BLR38 (260 aa).

Residues 1-18 (MHCTVFFLLIACAKSSYG) form the signal peptide. The RxLR signature appears at 46 to 49 (RLLR). The Nuclear localuization signal (NLS) signature appears at 136-148 (MPSSRKRPRALDE).

This sequence belongs to the RxLR effector family.

The protein localises to the secreted. Its subcellular location is the host nucleus. Its function is as follows. Secreted effector that triggers a robust hypersensitive response (HR) in Lactuca serriola LS102. The response to BLN06 was visible as strong necrosis. Although effector recognition is frequently associated with single dominant R gene loci, the recognition of BLR38 requires 2 unlinked loci that display incomplete dominance. The chain is RxLR effector protein BLR38 from Bremia lactucae (Lettuce downy mildew).